Consider the following 293-residue polypeptide: Acidic endochitinase SE2 (293 aa).

A signal peptide spans 1 to 25 (MAAKIVSVLFLISLLIFASFESSHG). Residues 26 to 293 (SQIVIYWGQN…GYSSAIKSSV (268 aa)) enclose the GH18 domain. Cystine bridges form between Cys-45–Cys-91 and Cys-75–Cys-81. The active-site Proton donor is Glu-151. Cys-183 and Cys-212 are joined by a disulfide.

This sequence belongs to the glycosyl hydrolase 18 family. Chitinase class II subfamily. In terms of tissue distribution, accumulates in leaves during infection.

It is found in the secreted. The protein localises to the extracellular space. It carries out the reaction Random endo-hydrolysis of N-acetyl-beta-D-glucosaminide (1-&gt;4)-beta-linkages in chitin and chitodextrins.. Functionally, this protein functions as a defense against chitin containing fungal pathogens. This endochitinase also exhibits exochitinase activity, i.e. it is capable of hydrolyzing chito-oligosaccharides, including chitobiose. In Beta vulgaris (Sugar beet), this protein is Acidic endochitinase SE2 (SE2).